Here is a 177-residue protein sequence, read N- to C-terminus: Large ribosomal subunit protein uL6 (177 aa).

Belongs to the universal ribosomal protein uL6 family. Part of the 50S ribosomal subunit.

Its function is as follows. This protein binds to the 23S rRNA, and is important in its secondary structure. It is located near the subunit interface in the base of the L7/L12 stalk, and near the tRNA binding site of the peptidyltransferase center. This is Large ribosomal subunit protein uL6 from Erythrobacter litoralis (strain HTCC2594).